We begin with the raw amino-acid sequence, 415 residues long: Serine hydroxymethyltransferase (415 aa).

Residues leucine 117 and 121 to 123 each bind (6S)-5,6,7,8-tetrahydrofolate; that span reads GHL. The residue at position 226 (lysine 226) is an N6-(pyridoxal phosphate)lysine. (6S)-5,6,7,8-tetrahydrofolate contacts are provided by residues glutamate 241 and 349–351; that span reads SPF.

It belongs to the SHMT family. In terms of assembly, homodimer. It depends on pyridoxal 5'-phosphate as a cofactor.

It is found in the cytoplasm. It carries out the reaction (6R)-5,10-methylene-5,6,7,8-tetrahydrofolate + glycine + H2O = (6S)-5,6,7,8-tetrahydrofolate + L-serine. Its pathway is one-carbon metabolism; tetrahydrofolate interconversion. The protein operates within amino-acid biosynthesis; glycine biosynthesis; glycine from L-serine: step 1/1. Functionally, catalyzes the reversible interconversion of serine and glycine with tetrahydrofolate (THF) serving as the one-carbon carrier. This reaction serves as the major source of one-carbon groups required for the biosynthesis of purines, thymidylate, methionine, and other important biomolecules. Also exhibits THF-independent aldolase activity toward beta-hydroxyamino acids, producing glycine and aldehydes, via a retro-aldol mechanism. In Geobacter sulfurreducens (strain ATCC 51573 / DSM 12127 / PCA), this protein is Serine hydroxymethyltransferase.